The primary structure comprises 89 residues: Small ribosomal subunit protein uS15 (89 aa).

Residues 1-18 (MSLDTAEKQKLIENHQVH) show a composition bias toward basic and acidic residues. Residues 1-23 (MSLDTAEKQKLIENHQVHPTDTG) form a disordered region.

It belongs to the universal ribosomal protein uS15 family. Part of the 30S ribosomal subunit. Forms a bridge to the 50S subunit in the 70S ribosome, contacting the 23S rRNA.

Functionally, one of the primary rRNA binding proteins, it binds directly to 16S rRNA where it helps nucleate assembly of the platform of the 30S subunit by binding and bridging several RNA helices of the 16S rRNA. In terms of biological role, forms an intersubunit bridge (bridge B4) with the 23S rRNA of the 50S subunit in the ribosome. This chain is Small ribosomal subunit protein uS15, found in Prochlorococcus marinus (strain MIT 9301).